The following is a 396-amino-acid chain: Elongation factor Tu (396 aa).

In terms of domain architecture, tr-type G spans 10–205; sequence KEHVNIGTIG…AVDNYIETPV (196 aa). The tract at residues 19–26 is G1; the sequence is GHVDHGKT. A GTP-binding site is contributed by 19–26; sequence GHVDHGKT. A Mg(2+)-binding site is contributed by Thr26. The interval 60-64 is G2; the sequence is GITIN. The interval 81-84 is G3; sequence DCPG. GTP is bound by residues 81–85 and 136–139; these read DCPGH and NKVD. Residues 136-139 are G4; sequence NKVD. The G5 stretch occupies residues 175-177; it reads SAL.

The protein belongs to the TRAFAC class translation factor GTPase superfamily. Classic translation factor GTPase family. EF-Tu/EF-1A subfamily. As to quaternary structure, monomer.

It is found in the cytoplasm. The catalysed reaction is GTP + H2O = GDP + phosphate + H(+). GTP hydrolase that promotes the GTP-dependent binding of aminoacyl-tRNA to the A-site of ribosomes during protein biosynthesis. This Mycoplasmopsis pulmonis (strain UAB CTIP) (Mycoplasma pulmonis) protein is Elongation factor Tu.